A 725-amino-acid polypeptide reads, in one-letter code: Envelope glycoprotein H (725 aa).

A signal peptide spans 1–19 (MKLSLILSIALCSTRVVYA). Residues 20 to 700 (AGAEAPRISR…LVNVRPSMPY (681 aa)) are Virion surface-facing. N-linked (GlcNAc...) asparagine; by host glycans are attached at residues Asn38 and Asn50. Positions 184–247 (TGYTVTVSLA…QTPDHDLLVV (64 aa)) are interaction with gL. N-linked (GlcNAc...) asparagine; by host glycosylation is found at Asn319, Asn459, Asn621, and Asn681. Residues 701–721 (SVVVALVIIAILMALGLYRLC) traverse the membrane as a helical segment. Topologically, residues 722-725 (RQKR) are intravirion.

This sequence belongs to the herpesviridae glycoprotein H family. Interacts with glycoprotein L (gL); this interaction is necessary for the correct processing and cell surface expression of gH. The heterodimer gH/gL seems to interact with gB trimers during fusion. Post-translationally, N-glycosylated, O-glycosylated, and sialylated.

The protein localises to the virion membrane. It is found in the host cell membrane. Its subcellular location is the host endosome membrane. The heterodimer glycoprotein H-glycoprotein L is required for the fusion of viral and plasma membranes leading to virus entry into the host cell. Following initial binding to host receptor, membrane fusion is mediated by the fusion machinery composed of gB and the heterodimer gH/gL. May also be involved in the fusion between the virion envelope and the outer nuclear membrane during virion morphogenesis. The polypeptide is Envelope glycoprotein H (Murid herpesvirus 1 (strain Smith) (MuHV-1)).